We begin with the raw amino-acid sequence, 541 residues long: MARCRHHSGYLADDEAAHSTYVAPLPKKHLLPEMRPTCKLGRVPHLPSMNQYSEHQSHQQNFRHPLAFGGFLDFLTEGQVLDSLQTVVEQATERLAAMKTEAGVPLVDIQDPVEVPSSRHRSRARPSIDTVHRHRARPTLCAGRPNNYPSCSSSMSDSHSSITAGWLGSHSQDSDLGARGIGSLPPMRDKLLLEKNLKRLLRLENKGKILNQSCSQRDSLLWDSLGSQTSSQWTREQPLSWFSGLLGSSPATPETSELGLGEQEMIFLKQKLNKEMKSLLNQPRPFNLPTYCPLREPHHTLDFLAKHRLFPALQRVVSQAVDKLSHACRHNGFPLFPVTSETIPDLPGNSDLLQPSSKASIPTNREARGEPCDSLTTAYSPKTSHRKSKGRRGSPPNAVQMATRFRLKVTPTQVSNVPISSFHSMQEAPNSEPKLQKQAMASNCNHISQPCHGLHLTLPAPGITVEVASCQGRLRGPVQHRLASPCCLHSHFPFPLFPPFLSLGKSFSTSPPTLHPEVTSRAGLEVLEQPLKGRGSFTHHF.

Positions 79–102 form a coiled coil; that stretch reads QVLDSLQTVVEQATERLAAMKTEA. The segment at 346–397 is disordered; it reads LPGNSDLLQPSSKASIPTNREARGEPCDSLTTAYSPKTSHRKSKGRRGSPPN. Residues 351–363 show a composition bias toward polar residues; that stretch reads DLLQPSSKASIPT. A compositionally biased stretch (basic residues) spans 383–392; the sequence is TSHRKSKGRR. Ser-394 is subject to Phosphoserine.

It is found in the cytoplasm. It localises to the cytoskeleton. The protein resides in the microtubule organizing center. Its subcellular location is the centrosome. The sequence is that of Coiled-coil domain-containing protein 116 (Ccdc116) from Mus musculus (Mouse).